Reading from the N-terminus, the 205-residue chain is Mitotic spindle assembly checkpoint protein MAD2A (205 aa).

A2 is subject to N-acetylalanine. The 184-residue stretch at 14-197 (RGSAEIVAEF…TTIHKVNSMV (184 aa)) folds into the HORMA domain. Phosphoserine is present on residues S130, S170, S185, and S195. A required for assuming the closed conformation and for interaction with CDC20 region spans residues 195–205 (SMVAYKTPVND).

It belongs to the MAD2 family. As to quaternary structure, monomer and homodimer. Heterodimerizes with MAD2L1 in order to form a tetrameric MAD1L1-MAD2L1 core complex. In the closed and open conformation, interacts with MAD1L1. Formation of a heterotetrameric core complex containing two molecules each of MAD1L1 and of MAD2L1 promotes binding of another molecule of MAD2L1 to each MAD2L1, resulting in a heterohexamer. Interacts with MAD2L1BP. Interacts with ADAM17/TACE. Interacts with CDC20. Dimeric MAD2L1 in the closed conformation interacts with CDC20. Monomeric MAD2L1 in the open conformation does not interact with CDC20. CDC20 competes with MAD1L1 for MAD2L1 binding. In the closed conformation, interacts with BUB1B. Interacts with TTK. Interacts with TPR. Binds to UBD (via ubiquitin-like 1 domain) during mitosis. Interacts with isoform 1 and isoform 2 of NEK2. Interacts with HSF1; this interaction occurs in mitosis. Phosphorylated on multiple serine residues. The level of phosphorylation varies during the cell cycle and is highest during mitosis. Phosphorylation abolishes interaction with MAD1L1 and reduces interaction with CDC20. Phosphorylated by NEK2.

It is found in the nucleus. Its subcellular location is the chromosome. The protein resides in the centromere. It localises to the kinetochore. The protein localises to the cytoplasm. It is found in the cytoskeleton. Its subcellular location is the spindle pole. Its function is as follows. Component of the spindle-assembly checkpoint that prevents the onset of anaphase until all chromosomes are properly aligned at the metaphase plate. In the closed conformation (C-MAD2) forms a heterotetrameric complex with MAD1L1 at unattached kinetochores during prometaphase, and recruits an open conformation of MAD2L1 (O-MAD2) which then promotes the conversion of O-MAD2 to C-MAD2. Required for the execution of the mitotic checkpoint which monitors the process of kinetochore-spindle attachment and inhibits the activity of the anaphase promoting complex by sequestering CDC20 until all chromosomes are aligned at the metaphase plate. This chain is Mitotic spindle assembly checkpoint protein MAD2A (Mad2l1), found in Mus musculus (Mouse).